The following is a 531-amino-acid chain: GPI alpha-1,2-mannosyltransferase 3 (531 aa).

N-linked (GlcNAc...) asparagine glycosylation is present at Asn-84. 3 helical membrane passes run 99-119 (GLRGFSYPLMFAAIYKVLYLL), 124-144 (VWFLIWIPRLAQAVLSGIADV), and 174-196 (YCATRTLTNTMEAVLSTFALYYY). N-linked (GlcNAc...) asparagine glycosylation occurs at Asn-204. The next 6 helical transmembrane spans lie at 210–230 (LICVALAFLIRPTAVILWIPL), 249–269 (YLPIGILTLAASLTVDRIFFG), 303–323 (GVPVILCTHLPFFIHGCMVTP), 328–348 (ILLVAVAWTVLTYSALSHKEF), 350–370 (FIYPVLPVCMVFCGFSFSNLK), and 375–395 (AAVGFLVLSNLFPALYTGLIH). Residues Asn-414 and Asn-476 are each glycosylated (N-linked (GlcNAc...) asparagine).

Belongs to the glycosyltransferase 22 family. PIGB subfamily.

It localises to the endoplasmic reticulum membrane. Its pathway is glycolipid biosynthesis; glycosylphosphatidylinositol-anchor biosynthesis. Functionally, alpha-1,2-mannosyltransferase that catalyzes the transfer of the third mannose, via an alpha-1,2 bond, from a dolichol-phosphate-mannose (Dol-P-Man) to an alpha-D-Man-(1-&gt;6)-2-PEtn-alpha-D-Man-(1-&gt;4)-alpha-D-GlcN-(1-&gt;6)-(1-radyl,2-acyl-sn-glycero-3-phospho)-2-acyl-inositol intermediate to generate an alpha-D-Man-(1-&gt;2)-alpha-D-Man-(1-&gt;6)-2-PEtn-alpha-D-Man-(1-&gt;4)-alpha-D-GlcN-(1-&gt;6)-(1-radyl,2-acyl-sn-glycero-3-phospho)-2-acyl-inositol (also termed H6) and participates in the nineth step of the glycosylphosphatidylinositol-anchor biosynthesis. May also add the third mannose to an alpha-D-Man-(1-&gt;6)-alpha-D-Man-(1-&gt;4)-alpha-D-GlcN-(1-&gt;6)-(1-radyl,2-acyl-sn-glycero-3-phospho)-2-acyl-inositol (also termed H3) intermediate generating an alpha-D-Man-(1-&gt;2)-alpha-D-Man-(1-&gt;6)-alpha-D-Man-(1-&gt;4)-alpha-D-GlcN-(1-&gt;6)-(1-radyl,2-acyl-sn-glycero-3-phospho)-2-acyl-inositol (also termed H4). The sequence is that of GPI alpha-1,2-mannosyltransferase 3 from Xenopus laevis (African clawed frog).